A 204-amino-acid chain; its full sequence is Phosphopantothenoylcysteine decarboxylase (204 aa).

Residues Thr-53 and 104–107 each bind FMN; that span reads DANT. Asn-140 provides a ligand contact to substrate. The active-site Proton donor is Cys-173.

Belongs to the HFCD (homooligomeric flavin containing Cys decarboxylase) superfamily. As to quaternary structure, homotrimer. Requires FMN as cofactor.

The catalysed reaction is N-[(R)-4-phosphopantothenoyl]-L-cysteine + H(+) = (R)-4'-phosphopantetheine + CO2. The protein operates within cofactor biosynthesis; coenzyme A biosynthesis; CoA from (R)-pantothenate: step 3/5. In terms of biological role, catalyzes the decarboxylation of the cysteine moiety of 4-phosphopantothenoylcysteine to form 4'-phosphopantotheine and this reaction forms part of the biosynthesis of coenzyme A. The chain is Phosphopantothenoylcysteine decarboxylase (Ppcdc) from Mus musculus (Mouse).